Here is a 903-residue protein sequence, read N- to C-terminus: Protein U7 (903 aa).

Residues 665–685 (KALLTFLTNIVFIVFVVNTLY) form a helical membrane-spanning segment.

Belongs to the herpesviridae US22 family.

It localises to the host membrane. The sequence is that of Protein U7 (U7) from Human herpesvirus 6B (strain Z29) (HHV-6 variant B).